Consider the following 297-residue polypeptide: Coiled-coil domain-containing protein 159 (297 aa).

The stretch at 147–297 (EELELVREEV…SKSGRSFPPA (151 aa)) forms a coiled coil. Positions 256-297 (LRGHKGHQCLSPPLPSWDSDSDCDQDLSQPPFSKSGRSFPPA) are disordered.

Interacts with DYNLT2. Interacts with GGNBP1. Interacts with OSBP2.

In terms of biological role, functions during spermatid development; may participate in the centrosome reduction procedure of spermatids and is required for the formation of the connecting piece/sperm head-tail coupling apparatus (HTCA) and the correct and tight attachment of the flagellum to the nuclear envelope. This chain is Coiled-coil domain-containing protein 159 (CCDC159), found in Homo sapiens (Human).